We begin with the raw amino-acid sequence, 180 residues long: ATP synthase subunit delta (180 aa).

The protein belongs to the ATPase delta chain family. F-type ATPases have 2 components, F(1) - the catalytic core - and F(0) - the membrane proton channel. F(1) has five subunits: alpha(3), beta(3), gamma(1), delta(1), epsilon(1). F(0) has three main subunits: a(1), b(2) and c(10-14). The alpha and beta chains form an alternating ring which encloses part of the gamma chain. F(1) is attached to F(0) by a central stalk formed by the gamma and epsilon chains, while a peripheral stalk is formed by the delta and b chains.

The protein resides in the cell membrane. Its function is as follows. F(1)F(0) ATP synthase produces ATP from ADP in the presence of a proton or sodium gradient. F-type ATPases consist of two structural domains, F(1) containing the extramembraneous catalytic core and F(0) containing the membrane proton channel, linked together by a central stalk and a peripheral stalk. During catalysis, ATP synthesis in the catalytic domain of F(1) is coupled via a rotary mechanism of the central stalk subunits to proton translocation. In terms of biological role, this protein is part of the stalk that links CF(0) to CF(1). It either transmits conformational changes from CF(0) to CF(1) or is implicated in proton conduction. The protein is ATP synthase subunit delta of Lactobacillus delbrueckii subsp. bulgaricus (strain ATCC BAA-365 / Lb-18).